Consider the following 491-residue polypeptide: Glutathione synthetase GSH2 (491 aa).

Residue arginine 128 coordinates substrate. Glutamate 146 serves as a coordination point for ATP. The Mg(2+) site is built by glutamate 146 and asparagine 148. Substrate-binding positions include 150 to 153, 228 to 230, glutamine 234, and 285 to 288; these read VSVS, ERN, and RTGY. Residues lysine 324, 382 to 391, tyrosine 393, 415 to 418, and glutamate 442 each bind ATP; these read KPQREGGGNN and MELI. A Mg(2+)-binding site is contributed by glutamate 386. Arginine 467 is a binding site for substrate. ATP-binding residues include lysine 469 and glutamate 475. Residue 478–479 coordinates substrate; that stretch reads VA.

Belongs to the eukaryotic GSH synthase family. As to quaternary structure, homodimer. Mg(2+) serves as cofactor.

The enzyme catalyses gamma-L-glutamyl-L-cysteine + glycine + ATP = glutathione + ADP + phosphate + H(+). It participates in sulfur metabolism; glutathione biosynthesis; glutathione from L-cysteine and L-glutamate: step 2/2. The protein is Glutathione synthetase GSH2 (GSH2) of Saccharomyces cerevisiae (strain ATCC 204508 / S288c) (Baker's yeast).